The chain runs to 192 residues: Elongation factor P (192 aa).

This sequence belongs to the elongation factor P family.

Its subcellular location is the cytoplasm. It participates in protein biosynthesis; polypeptide chain elongation. Its function is as follows. Involved in peptide bond synthesis. Stimulates efficient translation and peptide-bond synthesis on native or reconstituted 70S ribosomes in vitro. Probably functions indirectly by altering the affinity of the ribosome for aminoacyl-tRNA, thus increasing their reactivity as acceptors for peptidyl transferase. The polypeptide is Elongation factor P (Borrelia garinii subsp. bavariensis (strain ATCC BAA-2496 / DSM 23469 / PBi) (Borreliella bavariensis)).